A 233-amino-acid chain; its full sequence is MCRHLGWLGAQVAVSSLVLDPPQGLRVQSYAPRRQKHGLMNADGWGVGFFDGAIPRRWRSPAPLWGDTSFHSVAPALRSHCILAAVRSATVGMPIEVSATPPFTDGHWLLAHNGVVDRAVLPAGPAAESVCDSAILAATIFAHGLDALGDTIVKVGAADPNARLNILAANGSRLIATTWGDTLSILRRADGVVLASEPYDDDSGWGDVPDRHLVEVTQKGVTLTALDRAKGPR.

C2 (nucleophile) is an active-site residue. The 232-residue stretch at 2 to 233 folds into the Glutamine amidotransferase type-2 domain; the sequence is CRHLGWLGAQ…TALDRAKGPR (232 aa).

The catalysed reaction is gamma-L-glutamyl-hercynylcysteine S-oxide + H2O = S-(hercyn-2-yl)-L-cysteine S-oxide + L-glutamate. It functions in the pathway amino-acid biosynthesis; ergothioneine biosynthesis. Catalyzes the hydrolysis of the gamma-glutamyl amide bond of hercynyl-gamma-L-glutamyl-L-cysteine sulfoxide to produce hercynylcysteine sulfoxide, a step in the biosynthesis pathway of ergothioneine. Ergothioneine is an antioxidant that protects mycobacteria from oxidative stress. This Mycobacterium tuberculosis (strain ATCC 25618 / H37Rv) protein is Gamma-glutamyl-hercynylcysteine sulfoxide hydrolase (egtC).